The following is a 263-amino-acid chain: Endonuclease 8 (263 aa).

P2 (schiff-base intermediate with DNA) is an active-site residue. Catalysis depends on E3, which acts as the Proton donor. Residue K53 is the Proton donor; for beta-elimination activity of the active site. Residues Q70, R125, and N169 each coordinate DNA. An FPG-type zinc finger spans residues 229-263 (KVFHRDGEACERCGGIIEKTTLSSRPFYWCPHCQK). R253 (proton donor; for delta-elimination activity) is an active-site residue.

This sequence belongs to the FPG family. Zn(2+) serves as cofactor.

The catalysed reaction is 2'-deoxyribonucleotide-(2'-deoxyribose 5'-phosphate)-2'-deoxyribonucleotide-DNA = a 3'-end 2'-deoxyribonucleotide-(2,3-dehydro-2,3-deoxyribose 5'-phosphate)-DNA + a 5'-end 5'-phospho-2'-deoxyribonucleoside-DNA + H(+). Involved in base excision repair of DNA damaged by oxidation or by mutagenic agents. Acts as a DNA glycosylase that recognizes and removes damaged bases. Has a preference for oxidized pyrimidines, such as thymine glycol, 5,6-dihydrouracil and 5,6-dihydrothymine. Has AP (apurinic/apyrimidinic) lyase activity and introduces nicks in the DNA strand. Cleaves the DNA backbone by beta-delta elimination to generate a single-strand break at the site of the removed base with both 3'- and 5'-phosphates. The protein is Endonuclease 8 of Salmonella schwarzengrund (strain CVM19633).